We begin with the raw amino-acid sequence, 103 residues long: Pyrimidine/purine nucleoside phosphorylase (103 aa).

Belongs to the nucleoside phosphorylase PpnP family.

The enzyme catalyses a purine D-ribonucleoside + phosphate = a purine nucleobase + alpha-D-ribose 1-phosphate. It carries out the reaction adenosine + phosphate = alpha-D-ribose 1-phosphate + adenine. It catalyses the reaction cytidine + phosphate = cytosine + alpha-D-ribose 1-phosphate. The catalysed reaction is guanosine + phosphate = alpha-D-ribose 1-phosphate + guanine. The enzyme catalyses inosine + phosphate = alpha-D-ribose 1-phosphate + hypoxanthine. It carries out the reaction thymidine + phosphate = 2-deoxy-alpha-D-ribose 1-phosphate + thymine. It catalyses the reaction uridine + phosphate = alpha-D-ribose 1-phosphate + uracil. The catalysed reaction is xanthosine + phosphate = alpha-D-ribose 1-phosphate + xanthine. In terms of biological role, catalyzes the phosphorolysis of diverse nucleosides, yielding D-ribose 1-phosphate and the respective free bases. Can use uridine, adenosine, guanosine, cytidine, thymidine, inosine and xanthosine as substrates. Also catalyzes the reverse reactions. The chain is Pyrimidine/purine nucleoside phosphorylase from Shewanella putrefaciens (strain CN-32 / ATCC BAA-453).